A 437-amino-acid polypeptide reads, in one-letter code: GTPase Obg (437 aa).

In terms of domain architecture, Obg spans 2 to 160 (SMFLDTAKIS…RELQLELKIL (159 aa)). The region spanning 161–338 (ADVGLVGFPS…LMDATAELLA (178 aa)) is the OBG-type G domain. GTP is bound by residues 167–174 (GFPSVGKS), 192–196 (FTTIV), 214–217 (DLPG), 284–287 (NKMD), and 319–321 (SSL). Residues serine 174 and threonine 194 each contribute to the Mg(2+) site. The region spanning 359-437 (GFNEDERPFE…IGNFEFEFVD (79 aa)) is the OCT domain.

It belongs to the TRAFAC class OBG-HflX-like GTPase superfamily. OBG GTPase family. In terms of assembly, monomer. The cofactor is Mg(2+).

The protein resides in the cytoplasm. An essential GTPase which binds GTP, GDP and possibly (p)ppGpp with moderate affinity, with high nucleotide exchange rates and a fairly low GTP hydrolysis rate. Plays a role in control of the cell cycle, stress response, ribosome biogenesis and in those bacteria that undergo differentiation, in morphogenesis control. This chain is GTPase Obg, found in Streptococcus agalactiae serotype Ia (strain ATCC 27591 / A909 / CDC SS700).